Here is a 270-residue protein sequence, read N- to C-terminus: UPF0246 protein Psyc_0554 (270 aa).

The protein belongs to the UPF0246 family.

This is UPF0246 protein Psyc_0554 from Psychrobacter arcticus (strain DSM 17307 / VKM B-2377 / 273-4).